The primary structure comprises 299 residues: MAKSLLASSLSVRTKILQTGVSLYNTTHGFHEEEVKKILEQFPGGSIDLQKKQNGIGILTLNNSNKMNAFSGAMMLQLLERVIELENWTEGKGLIVHGAKNTFCSGSDLNAVKALSTPENGVALSMFMQNTLTRFMRLPLISVALVQGWAMGGGAELTTACDFRLMTEESVIRFVHKEMGIVPSWGGASRLVEIIGSRQALKVLSGTFKLDSKEALRIGLADEVLQPSDEATALEQAQEWLEQFVSGPAQVIRGLKKSVCSGRELYLEEALQNERDVLETLWGGPANLEAIAKKGKHTK.

An N6-acetyllysine; alternate modification is found at Lys209. Lys209 carries the post-translational modification N6-succinyllysine; alternate. Lys293 bears the N6-succinyllysine mark.

The protein belongs to the enoyl-CoA hydratase/isomerase family.

The protein localises to the cytoplasm. It is found in the cytosol. It catalyses the reaction (2S)-ethylmalonyl-CoA + H(+) = butanoyl-CoA + CO2. The catalysed reaction is (S)-methylmalonyl-CoA + H(+) = propanoyl-CoA + CO2. It carries out the reaction (2R)-ethylmalonyl-CoA + H(+) = butanoyl-CoA + CO2. Its function is as follows. Decarboxylates ethylmalonyl-CoA, a potentially toxic metabolite, to form butyryl-CoA, suggesting it might be involved in metabolite proofreading. Acts preferentially on (S)-ethylmalonyl-CoA but also has some activity on the (R)-isomer. Also has methylmalonyl-CoA decarboxylase activity at lower level. The sequence is that of Ethylmalonyl-CoA decarboxylase (Echdc1) from Rattus norvegicus (Rat).